The primary structure comprises 156 residues: Transcriptional repressor NrdR (156 aa).

The segment at 3–34 is a zinc-finger region; that stretch reads CPFCGSMDTRVLDSRPTLDGTAIRRRRECSSC. Positions 49 to 139 constitute an ATP-cone domain; that stretch reads VLVVKKDGRR…VYRDFREVDQ (91 aa).

Belongs to the NrdR family. Requires Zn(2+) as cofactor.

Negatively regulates transcription of bacterial ribonucleotide reductase nrd genes and operons by binding to NrdR-boxes. This is Transcriptional repressor NrdR from Thermotoga maritima (strain ATCC 43589 / DSM 3109 / JCM 10099 / NBRC 100826 / MSB8).